Here is a 272-residue protein sequence, read N- to C-terminus: Tail completion protein gp15 (272 aa).

Positions 240–272 are disordered; the sequence is RDIDPEDWDGTVKQTFTSNVNRPTPPEPPGPRT. Residues 251–260 are compositionally biased toward polar residues; sequence VKQTFTSNVN. The span at 262-272 shows a compositional bias: pro residues; it reads PTPPEPPGPRT.

In terms of assembly, hexamer. Interacts with gp3 and gp18 on the bottom part of the hexamer. Interacts with gp13 and gp14 on the top part of the hexamer.

Its subcellular location is the virion. Functionally, stabilizes the tail sheath structure and acts as a connector between the end of tail and the portal vertex of the capsid. In Enterobacteria phage T4 (Bacteriophage T4), this protein is Tail completion protein gp15 (15).